The sequence spans 290 residues: Ribosomal RNA small subunit methyltransferase A (290 aa).

Asn27, Leu29, Gly54, Glu75, Asp100, and Asn125 together coordinate S-adenosyl-L-methionine.

It belongs to the class I-like SAM-binding methyltransferase superfamily. rRNA adenine N(6)-methyltransferase family. RsmA subfamily.

It localises to the cytoplasm. It carries out the reaction adenosine(1518)/adenosine(1519) in 16S rRNA + 4 S-adenosyl-L-methionine = N(6)-dimethyladenosine(1518)/N(6)-dimethyladenosine(1519) in 16S rRNA + 4 S-adenosyl-L-homocysteine + 4 H(+). Functionally, specifically dimethylates two adjacent adenosines (A1518 and A1519) in the loop of a conserved hairpin near the 3'-end of 16S rRNA in the 30S particle. May play a critical role in biogenesis of 30S subunits. The sequence is that of Ribosomal RNA small subunit methyltransferase A from Streptococcus pneumoniae (strain Hungary19A-6).